The primary structure comprises 110 residues: UPF0122 protein lmo1802 (110 aa).

This sequence belongs to the UPF0122 family.

Its function is as follows. Might take part in the signal recognition particle (SRP) pathway. This is inferred from the conservation of its genetic proximity to ftsY/ffh. May be a regulatory protein. This is UPF0122 protein lmo1802 from Listeria monocytogenes serovar 1/2a (strain ATCC BAA-679 / EGD-e).